Reading from the N-terminus, the 324-residue chain is Heat-inducible transcription repressor HrcA (324 aa).

The protein belongs to the HrcA family.

Functionally, negative regulator of class I heat shock genes (grpE-dnaK-dnaJ and groELS operons). Prevents heat-shock induction of these operons. This chain is Heat-inducible transcription repressor HrcA, found in Parasynechococcus marenigrum (strain WH8102).